The chain runs to 389 residues: Phospho-N-acetylmuramoyl-pentapeptide-transferase (389 aa).

Helical transmembrane passes span 25–45 (RAVM…PWVI), 73–93 (TMGG…WGDL), 97–117 (FIWI…VDDY), 135–155 (FWQS…VSEA), 190–210 (ISYP…IVGA), 222–242 (GLVI…AYVM), 258–278 (GAGE…AFLW), 286–306 (VFMG…VAVI), 311–331 (IVLF…MLQV), and 366–386 (QVVV…LSTL).

Belongs to the glycosyltransferase 4 family. MraY subfamily. Mg(2+) is required as a cofactor.

The protein localises to the cell inner membrane. The enzyme catalyses UDP-N-acetyl-alpha-D-muramoyl-L-alanyl-gamma-D-glutamyl-meso-2,6-diaminopimeloyl-D-alanyl-D-alanine + di-trans,octa-cis-undecaprenyl phosphate = di-trans,octa-cis-undecaprenyl diphospho-N-acetyl-alpha-D-muramoyl-L-alanyl-D-glutamyl-meso-2,6-diaminopimeloyl-D-alanyl-D-alanine + UMP. Its pathway is cell wall biogenesis; peptidoglycan biosynthesis. Its function is as follows. Catalyzes the initial step of the lipid cycle reactions in the biosynthesis of the cell wall peptidoglycan: transfers peptidoglycan precursor phospho-MurNAc-pentapeptide from UDP-MurNAc-pentapeptide onto the lipid carrier undecaprenyl phosphate, yielding undecaprenyl-pyrophosphoryl-MurNAc-pentapeptide, known as lipid I. The polypeptide is Phospho-N-acetylmuramoyl-pentapeptide-transferase (Burkholderia mallei (strain NCTC 10247)).